A 209-amino-acid chain; its full sequence is Octanoyltransferase (209 aa).

Positions Gly30–Lys209 constitute a BPL/LPL catalytic domain. Residues Arg69–His76, Ala143–Gly145, and Gly156–Ala158 contribute to the substrate site. Cys174 functions as the Acyl-thioester intermediate in the catalytic mechanism.

Belongs to the LipB family.

It localises to the cytoplasm. The catalysed reaction is octanoyl-[ACP] + L-lysyl-[protein] = N(6)-octanoyl-L-lysyl-[protein] + holo-[ACP] + H(+). The protein operates within protein modification; protein lipoylation via endogenous pathway; protein N(6)-(lipoyl)lysine from octanoyl-[acyl-carrier-protein]: step 1/2. In terms of biological role, catalyzes the transfer of endogenously produced octanoic acid from octanoyl-acyl-carrier-protein onto the lipoyl domains of lipoate-dependent enzymes. Lipoyl-ACP can also act as a substrate although octanoyl-ACP is likely to be the physiological substrate. The polypeptide is Octanoyltransferase (Rickettsia bellii (strain OSU 85-389)).